Consider the following 390-residue polypeptide: O-glycoside alpha-1,2-mannosyltransferase omh1 (390 aa).

E279 serves as the catalytic Nucleophile.

Belongs to the glycosyltransferase 15 family.

It is found in the endoplasmic reticulum. The protein localises to the golgi apparatus. In terms of biological role, mannosyltransferase involved in O-glycosylation of cell wall and secreted proteins. Plays a major role in extending alpha-1,2-linked mannose in the O-glycan pathway. In Schizosaccharomyces pombe (strain 972 / ATCC 24843) (Fission yeast), this protein is O-glycoside alpha-1,2-mannosyltransferase omh1 (omh1).